A 291-amino-acid chain; its full sequence is Oxidative stress-responsive serine-rich protein 1 (291 aa).

The tract at residues 44 to 139 (RTTVDDTKPK…STGENSTSLD (96 aa)) is disordered. A compositionally biased stretch (basic residues) spans 65–83 (STRKSSRGAVRIQRRRRSK). Composition is skewed to polar residues over residues 95–113 (CSTTASPSSSQLKQRSQTE) and 127–139 (KEFSTGENSTSLD). Thr-143 is subject to Phosphothreonine.

Ubiquitous with high level in testis, placenta and cardiac myocytes. In terms of tissue distribution, expressed in testis, unpreganant uterus and cardiac myocytes.

The protein is Oxidative stress-responsive serine-rich protein 1 (Oser1) of Rattus norvegicus (Rat).